The primary structure comprises 394 residues: GTPase Obg (394 aa).

The region spanning 4–162 (SNFVDYVKIY…LMVILELKLL (159 aa)) is the Obg domain. The 167-residue stretch at 163 to 329 (ADVGLVGFPN…LKDILWTELN (167 aa)) folds into the OBG-type G domain. GTP is bound by residues 169 to 176 (GFPNAGKS), 194 to 198 (FTTLE), 216 to 219 (DIPG), 283 to 286 (TKSD), and 310 to 312 (SSV). Mg(2+)-binding residues include serine 176 and threonine 196. The disordered stretch occupies residues 358–394 (KDMGEDEDFEYEYEEDADDDFDYEYEDENWDEEEEKK). The segment covering 361 to 394 (GEDEDFEYEYEEDADDDFDYEYEDENWDEEEEKK) has biased composition (acidic residues).

This sequence belongs to the TRAFAC class OBG-HflX-like GTPase superfamily. OBG GTPase family. Monomer. Requires Mg(2+) as cofactor.

It is found in the cytoplasm. An essential GTPase which binds GTP, GDP and possibly (p)ppGpp with moderate affinity, with high nucleotide exchange rates and a fairly low GTP hydrolysis rate. Plays a role in control of the cell cycle, stress response, ribosome biogenesis and in those bacteria that undergo differentiation, in morphogenesis control. This chain is GTPase Obg, found in Phocaeicola vulgatus (strain ATCC 8482 / DSM 1447 / JCM 5826 / CCUG 4940 / NBRC 14291 / NCTC 11154) (Bacteroides vulgatus).